A 361-amino-acid chain; its full sequence is Beta-hexosaminidase (361 aa).

Residues aspartate 69, arginine 77, arginine 144, and 174–175 contribute to the substrate site; that span reads KH. Histidine 187 acts as the Proton donor/acceptor in catalysis. The active-site Nucleophile is the aspartate 258.

Belongs to the glycosyl hydrolase 3 family. NagZ subfamily.

It localises to the cytoplasm. It catalyses the reaction Hydrolysis of terminal non-reducing N-acetyl-D-hexosamine residues in N-acetyl-beta-D-hexosaminides.. It participates in cell wall biogenesis; peptidoglycan recycling. Plays a role in peptidoglycan recycling by cleaving the terminal beta-1,4-linked N-acetylglucosamine (GlcNAc) from peptide-linked peptidoglycan fragments, giving rise to free GlcNAc, anhydro-N-acetylmuramic acid and anhydro-N-acetylmuramic acid-linked peptides. This Neisseria gonorrhoeae (strain NCCP11945) protein is Beta-hexosaminidase.